We begin with the raw amino-acid sequence, 333 residues long: Galactinol synthase 1 (333 aa).

Lysine 104 is a catalytic residue. The Mn(2+) site is built by aspartate 120, aspartate 122, and histidine 257.

The protein belongs to the glycosyltransferase 8 family. Galactosyltransferase subfamily. The cofactor is a divalent metal cation. As to expression, expressed in source leaves, specifically in the mesophyll.

Its subcellular location is the cytoplasm. It catalyses the reaction myo-inositol + UDP-alpha-D-galactose = alpha-D-galactosyl-(1-&gt;3)-1D-myo-inositol + UDP + H(+). In terms of biological role, major galactinol synthase mainly involved in the biosynthesis of storage raffinose family oligosaccharides (RFOs) that function as osmoprotectants. May promote plant stress tolerance. This is Galactinol synthase 1 (GOLS1) from Ajuga reptans (Bugle).